The following is a 232-amino-acid chain: Mediator of RNA polymerase II transcription subunit 18 (232 aa).

This sequence belongs to the Mediator complex subunit 18 family. As to quaternary structure, component of the Mediator complex.

The protein localises to the nucleus. Its function is as follows. Component of the Mediator complex, a coactivator involved in the regulated transcription of nearly all RNA polymerase II-dependent genes. Mediator functions as a bridge to convey information from gene-specific regulatory proteins to the basal RNA polymerase II transcription machinery. Mediator is recruited to promoters by direct interactions with regulatory proteins and serves as a scaffold for the assembly of a functional preinitiation complex with RNA polymerase II and the general transcription factors. The polypeptide is Mediator of RNA polymerase II transcription subunit 18 (mdt-18) (Caenorhabditis elegans).